We begin with the raw amino-acid sequence, 341 residues long: L-threonine 3-dehydrogenase (341 aa).

Cys-38 provides a ligand contact to Zn(2+). Active-site charge relay system residues include Thr-40 and His-43. Zn(2+) is bound by residues His-63, Glu-64, Cys-93, Cys-96, Cys-99, and Cys-107. NAD(+)-binding positions include Ile-175, Asp-195, Arg-200, 262-264 (LGI), and 286-287 (IY).

The protein belongs to the zinc-containing alcohol dehydrogenase family. As to quaternary structure, homotetramer. Zn(2+) serves as cofactor.

The protein localises to the cytoplasm. The catalysed reaction is L-threonine + NAD(+) = (2S)-2-amino-3-oxobutanoate + NADH + H(+). It participates in amino-acid degradation; L-threonine degradation via oxydo-reductase pathway; glycine from L-threonine: step 1/2. In terms of biological role, catalyzes the NAD(+)-dependent oxidation of L-threonine to 2-amino-3-ketobutyrate. In Shewanella sp. (strain MR-7), this protein is L-threonine 3-dehydrogenase.